A 273-amino-acid polypeptide reads, in one-letter code: 2,3,4,5-tetrahydropyridine-2,6-dicarboxylate N-succinyltransferase (273 aa).

Residues Arg-104 and Asp-141 each contribute to the substrate site.

The protein belongs to the transferase hexapeptide repeat family. Homotrimer.

The protein localises to the cytoplasm. The catalysed reaction is (S)-2,3,4,5-tetrahydrodipicolinate + succinyl-CoA + H2O = (S)-2-succinylamino-6-oxoheptanedioate + CoA. Its pathway is amino-acid biosynthesis; L-lysine biosynthesis via DAP pathway; LL-2,6-diaminopimelate from (S)-tetrahydrodipicolinate (succinylase route): step 1/3. The polypeptide is 2,3,4,5-tetrahydropyridine-2,6-dicarboxylate N-succinyltransferase (Psychrobacter arcticus (strain DSM 17307 / VKM B-2377 / 273-4)).